Consider the following 290-residue polypeptide: Eukaryotic translation initiation factor 3 subunit G (290 aa).

2 disordered regions span residues 1-35 (MSRL…DGTK) and 157-200 (ESTG…GERM). Residues 210–288 (ATLRVTNVSE…LILRVEFAKR (79 aa)) form the RRM domain.

It belongs to the eIF-3 subunit G family. Component of the eukaryotic translation initiation factor 3 (eIF-3) complex.

It is found in the cytoplasm. Functionally, RNA-binding component of the eukaryotic translation initiation factor 3 (eIF-3) complex, which is involved in protein synthesis of a specialized repertoire of mRNAs and, together with other initiation factors, stimulates binding of mRNA and methionyl-tRNAi to the 40S ribosome. The eIF-3 complex specifically targets and initiates translation of a subset of mRNAs involved in cell proliferation. This subunit can bind 18S rRNA. This Aspergillus clavatus (strain ATCC 1007 / CBS 513.65 / DSM 816 / NCTC 3887 / NRRL 1 / QM 1276 / 107) protein is Eukaryotic translation initiation factor 3 subunit G (tif35).